A 363-amino-acid polypeptide reads, in one-letter code: DNA replication and repair protein RecF (363 aa).

Residue 31-38 (GANSSGKT) participates in ATP binding.

This sequence belongs to the RecF family.

The protein resides in the cytoplasm. Its function is as follows. The RecF protein is involved in DNA metabolism; it is required for DNA replication and normal SOS inducibility. RecF binds preferentially to single-stranded, linear DNA. It also seems to bind ATP. This is DNA replication and repair protein RecF from Nitrosococcus oceani (strain ATCC 19707 / BCRC 17464 / JCM 30415 / NCIMB 11848 / C-107).